A 349-amino-acid polypeptide reads, in one-letter code: N-lysine methyltransferase KMT5A (349 aa).

Positions 18 to 46 (AAVAATAPGPEMVEQRGPGRPRSDGENVF) are disordered. Ser57 carries the post-translational modification Phosphoserine. The segment at 65 to 207 (RSPLQEENSV…SEERKKNELI (143 aa)) is disordered. The segment covering 107–119 (VKSDEQKSKDTRR) has biased composition (basic and acidic residues). Phosphothreonine is present on Thr138. Positions 154-170 (ALKKSLKGKQAPRKKSQ) are enriched in basic residues. Basic and acidic residues predominate over residues 192–207 (SKAELQSEERKKNELI). The SET domain maps to 213–334 (EGMKIDLIDG…AGEELLYDYG (122 aa)). S-adenosyl-L-methionine is bound by residues 223–225 (KGR), Tyr268, and 295–296 (NH).

It belongs to the class V-like SAM-binding methyltransferase superfamily. Histone-lysine methyltransferase family. PR/SET subfamily. As to quaternary structure, interacts with L3MBTL1. Interacts with SIRT2 (phosphorylated form); the interaction is direct, stimulates KMT5A-mediated methyltransferase activity at histone H4 'Lys-20' (H4K20me1) and is increased in a H(2)O(2)-induced oxidative stress-dependent manner. Post-translationally, ubiquitinated and degraded by the DCX(DTL) complex.

It is found in the nucleus. The protein localises to the chromosome. It catalyses the reaction L-lysyl(20)-[histone H4] + S-adenosyl-L-methionine = N(6)-methyl-L-lysyl(20)-[histone H4] + S-adenosyl-L-homocysteine + H(+). The catalysed reaction is L-lysyl-[protein] + S-adenosyl-L-methionine = N(6)-methyl-L-lysyl-[protein] + S-adenosyl-L-homocysteine + H(+). Its function is as follows. Protein-lysine N-methyltransferase that monomethylates both histones and non-histone proteins. Specifically monomethylates 'Lys-20' of histone H4 (H4K20me1). H4K20me1 is enriched during mitosis and represents a specific tag for epigenetic transcriptional repression. Mainly functions in euchromatin regions, thereby playing a central role in the silencing of euchromatic genes. Required for cell proliferation, probably by contributing to the maintenance of proper higher-order structure of DNA during mitosis. Involved in chromosome condensation and proper cytokinesis. Nucleosomes are preferred as substrate compared to free histones. Mediates monomethylation of p53/TP53 at 'Lys-382', leading to repress p53/TP53-target genes. Plays a negative role in TGF-beta response regulation and a positive role in cell migration. This chain is N-lysine methyltransferase KMT5A, found in Mus musculus (Mouse).